Here is an 863-residue protein sequence, read N- to C-terminus: Desmocollin-2 (863 aa).

The propeptide occupies 1 to 89 (KFIGRVNLKE…QEKVLRRAKR (89 aa)). 5 consecutive Cadherin domains span residues 90 to 197 (RWAP…APIF), 198 to 309 (TETS…LPTF), 310 to 423 (TRSS…GPEC), 424 to 528 (DPRV…VIPQ), and 529 to 644 (RTVV…ILGK). Residues 90–644 (RWAPIPCSVP…TGNREVILGK (555 aa)) lie on the Extracellular side of the membrane. Residue asparagine 120 is glycosylated (N-linked (GlcNAc...) asparagine). N-linked (GlcNAc...) asparagine glycans are attached at residues asparagine 346, asparagine 495, and asparagine 579. Residues 645–665 (WAILAILLGIALLFCILFTLV) traverse the membrane as a helical segment. Over 666–863 (CGATTGADKK…RTLAETCMKR (198 aa)) the chain is Cytoplasmic. A phosphoserine mark is found at serine 826, serine 830, and serine 835.

In terms of assembly, interacts with DSP, PKP2 and JUP. Interacts with DSG3; the interaction may limit the interaction of DSC3 with p38MAPK family members and therefore repress p38MAPK signaling activation. Expressed in esophagus and rumen. Weakly expressed in epithelia and cardiac muscle.

Its subcellular location is the cell membrane. The protein resides in the cell junction. The protein localises to the desmosome. In terms of biological role, a component of desmosome cell-cell junctions which are required for positive regulation of cellular adhesion. Promotes timely incorporation of DSG2 into desmosome intercellular junctions and promotes interaction of desmosome cell junctions with intermediate filament cytokeratin, via modulation of DSP phosphorylation. Plays an important role in desmosome-mediated maintenance of intestinal epithelial cell intercellular adhesion strength and barrier function. Positively regulates wound healing of intestinal mucosa via promotion of epithelial cell migration, and also plays a role in mechanotransduction of force between intestinal epithelial cells and extracellular matrix. May contribute to epidermal cell positioning (stratification) by mediating differential adhesiveness between cells that express different isoforms. The chain is Desmocollin-2 (DSC2) from Bos taurus (Bovine).